A 500-amino-acid chain; its full sequence is 7-alpha-hydroxycholest-4-en-3-one 12-alpha-hydroxylase (500 aa).

A helical transmembrane segment spans residues Trp-4 to Leu-24. Ser-325 is subject to Phosphoserine. Position 439 (Cys-439) interacts with heme.

It belongs to the cytochrome P450 family. Heme is required as a cofactor. As to expression, expressed in liver.

It localises to the endoplasmic reticulum membrane. The protein localises to the microsome membrane. The catalysed reaction is 7alpha-hydroxycholest-4-en-3-one + reduced [NADPH--hemoprotein reductase] + O2 = 7alpha,12alpha-dihydroxycholest-4-en-3-one + oxidized [NADPH--hemoprotein reductase] + H2O + H(+). It catalyses the reaction 5beta-cholestane-3alpha,7alpha-diol + reduced [NADPH--hemoprotein reductase] + O2 = 5beta-cholestane-3alpha,7alpha,12alpha-triol + oxidized [NADPH--hemoprotein reductase] + H2O + H(+). It carries out the reaction chenodeoxycholate + reduced [NADPH--hemoprotein reductase] + O2 = cholate + oxidized [NADPH--hemoprotein reductase] + H2O + H(+). The protein operates within lipid metabolism; bile acid biosynthesis. Functionally, a cytochrome P450 monooxygenase involved in primary bile acid biosynthesis. Catalyzes the 12alpha-hydroxylation of 7alpha-hydroxy-4-cholesten-3-one, an intermediate metabolite in cholic acid biosynthesis. Controls biliary balance of cholic acid and chenodeoxycholic acid, ultimately regulating the intestinal absorption of dietary lipids. Mechanistically, uses molecular oxygen inserting one oxygen atom into a substrate, and reducing the second into a water molecule, with two electrons provided by NADPH via cytochrome P450 reductase (CPR; NADPH--hemoprotein reductase). The polypeptide is 7-alpha-hydroxycholest-4-en-3-one 12-alpha-hydroxylase (Cyp8b1) (Mus musculus (Mouse)).